The primary structure comprises 312 residues: Acetyl-coenzyme A carboxylase carboxyl transferase subunit alpha (312 aa).

The CoA carboxyltransferase C-terminal domain maps to 36–286; the sequence is RLDKEVKSIY…KEYFLDALRT (251 aa).

Belongs to the AccA family. In terms of assembly, acetyl-CoA carboxylase is a heterohexamer composed of biotin carboxyl carrier protein (AccB), biotin carboxylase (AccC) and two subunits each of ACCase subunit alpha (AccA) and ACCase subunit beta (AccD).

The protein localises to the cytoplasm. It carries out the reaction N(6)-carboxybiotinyl-L-lysyl-[protein] + acetyl-CoA = N(6)-biotinyl-L-lysyl-[protein] + malonyl-CoA. It participates in lipid metabolism; malonyl-CoA biosynthesis; malonyl-CoA from acetyl-CoA: step 1/1. Component of the acetyl coenzyme A carboxylase (ACC) complex. First, biotin carboxylase catalyzes the carboxylation of biotin on its carrier protein (BCCP) and then the CO(2) group is transferred by the carboxyltransferase to acetyl-CoA to form malonyl-CoA. The sequence is that of Acetyl-coenzyme A carboxylase carboxyl transferase subunit alpha from Helicobacter pylori (strain J99 / ATCC 700824) (Campylobacter pylori J99).